A 100-amino-acid chain; its full sequence is Small ribosomal subunit protein uS14 (100 aa).

It belongs to the universal ribosomal protein uS14 family. Part of the 30S ribosomal subunit. Contacts proteins S3 and S10.

Functionally, binds 16S rRNA, required for the assembly of 30S particles and may also be responsible for determining the conformation of the 16S rRNA at the A site. This Prochlorococcus marinus (strain MIT 9303) protein is Small ribosomal subunit protein uS14.